The following is a 177-amino-acid chain: Transmembrane protein 275 (177 aa).

A disordered region spans residues Met-1–Arg-20. 2 helical membrane passes run Gly-36–Leu-56 and Leu-63–Cys-83. The interval Glu-113 to Ser-177 is disordered. The segment covering Ser-128 to Pro-161 has biased composition (low complexity).

The protein resides in the membrane. The sequence is that of Transmembrane protein 275 from Mus musculus (Mouse).